A 255-amino-acid polypeptide reads, in one-letter code: Glioma pathogenesis-related protein 1 (255 aa).

The N-terminal stretch at 1-17 (MQVILAVIVWMASSVSS) is a signal peptide. Positions 39–164 (QVHNQLRSKV…PNGANFICDY (126 aa)) constitute an SCP domain. The helical transmembrane segment at 224–244 (SLFLIAKSVLLLLSVIITIWV) threads the bilayer.

This sequence belongs to the CRISP family.

Its subcellular location is the membrane. This Mus musculus (Mouse) protein is Glioma pathogenesis-related protein 1 (Glipr1).